We begin with the raw amino-acid sequence, 87 residues long: MSLIVVRTHSFLFVLVLLLFASVFHSVDSQVFNPNGRYGRRDSASALSDASENKESSLGMKVYREISQDAQMENAEDRQFENQEYQS.

A signal peptide spans 1–29; sequence MSLIVVRTHSFLFVLVLLLFASVFHSVDS. The segment at 32-54 is disordered; sequence FNPNGRYGRRDSASALSDASENK.

It belongs to the scoloptoxin-23 family. As to expression, expressed by the venom gland.

Its subcellular location is the secreted. The sequence is that of U-scoloptoxin(23)-Er1a from Ethmostigmus rubripes (Giant centipede).